The primary structure comprises 280 residues: Thioesterase pynI (280 aa).

Acidic residues predominate over residues 136-145 (LADDSDDEDN). Residues 136–167 (LADDSDDEDNRSDASDASDDGSTMSDEEEEDD) form a disordered region.

This sequence belongs to the AMT4 thioesterase family.

Its pathway is secondary metabolite biosynthesis. Its function is as follows. Thioesterase; part of the gene cluster that mediates the biosynthesis of pyranonigrins, a family of antioxidative compounds. The first step of pyranonigrins biosynthesis is performed by the hybrid PKS-NRPS synthetase that condenses 6 malonyl-CoA units to an acetyl starter unit, to form a 1,3,5-trioxotetradecane-6,8-dienyl-ACP. The enoyl reductase (ER) domain of pynA is likely to be functional during the first two rounds of polyketide chain extension, to generate the saturated C-C bonds of the alkyl side chain. PynA subsequently forms the amide bond between the acyl chain and L-serine. Although pynA has a terminal reductase domain, it appears to require the thioesterase pynI for the release of the straight-chain intermediate from pynA via the formation of a tetramic acid pyranonigrin J. The methyltransferase pynC then coverts pyranonigrin J to pyranonigrin I via N-methylation. The FAD-dependent monooxygenase pynG catalyzes an epoxidation-mediated cyclization to form the dihydro-gamma-pyrone moiety, followed by pynD-catalyzed oxidation of the alcohol to the ketone and enolization to yield the characteristic tetramic acid-fused gamma-pyrone core of pyranonigrin H. Pyranonigrin H is substrate of pynH for dehydration-mediated exo-methylene formation from the serine side chain to produce pyranonigrin E, before the oxidase pynE reduces the exo-methylene of pyranonigrin E into a pendant methyl to form pyranonigrin G. The FAD-linked oxidoreductase pynB performs the reverse reaction and converts pyranonigrin G back to pyranonigrin E. The polypeptide is Thioesterase pynI (Aspergillus niger (strain ATCC MYA-4892 / CBS 513.88 / FGSC A1513)).